Here is a 259-residue protein sequence, read N- to C-terminus: uncharacterized protein (259 aa).

Residues 19–249 form the Radical SAM core domain; that stretch reads TKIPGAKYVI…DEVINTIKKK (231 aa). Positions 34, 38, and 41 each coordinate [4Fe-4S] cluster.

[4Fe-4S] cluster serves as cofactor.

This is an uncharacterized protein from Methanocaldococcus jannaschii (strain ATCC 43067 / DSM 2661 / JAL-1 / JCM 10045 / NBRC 100440) (Methanococcus jannaschii).